The following is a 33-amino-acid chain: Photosystem II reaction center protein Psb30 (33 aa).

A helical transmembrane segment spans residues 5–25 (VIAQLTVLTLMVVSGPLVIVL).

The protein belongs to the Psb30/Ycf12 family. In terms of assembly, PSII is composed of 1 copy each of membrane proteins PsbA, PsbB, PsbC, PsbD, PsbE, PsbF, PsbH, PsbI, PsbJ, PsbK, PsbL, PsbM, PsbT, PsbX, PsbY, PsbZ, Psb30/Ycf12, peripheral proteins of the oxygen-evolving complex and a large number of cofactors. It forms dimeric complexes.

The protein resides in the plastid. It is found in the chloroplast thylakoid membrane. Functionally, a core subunit of photosystem II (PSII), probably helps stabilize the reaction center. The protein is Photosystem II reaction center protein Psb30 of Pinus koraiensis (Korean pine).